We begin with the raw amino-acid sequence, 83 residues long: Putative defensin-like protein 67 (83 aa).

Residues 1 to 24 (MGSSKLMVTCIVVAMLTISCDILS) form the signal peptide. Cystine bridges form between C38–C82, C42–C65, C51–C80, and C55–C81.

The protein belongs to the DEFL family.

Its subcellular location is the secreted. This chain is Putative defensin-like protein 67, found in Arabidopsis thaliana (Mouse-ear cress).